The primary structure comprises 254 residues: Geranylgeranylglyceryl phosphate synthase (254 aa).

D27 and S56 together coordinate Mg(2+). Sn-glycerol 1-phosphate contacts are provided by residues 174 to 180 (YLEAGSG), 212 to 213 (GG), and 234 to 235 (GT).

Belongs to the GGGP/HepGP synthase family. Group II subfamily. As to quaternary structure, homohexamer. It depends on Mg(2+) as a cofactor.

It localises to the cytoplasm. The catalysed reaction is sn-glycerol 1-phosphate + (2E,6E,10E)-geranylgeranyl diphosphate = sn-3-O-(geranylgeranyl)glycerol 1-phosphate + diphosphate. The protein operates within membrane lipid metabolism; glycerophospholipid metabolism. In terms of biological role, prenyltransferase that catalyzes the transfer of the geranylgeranyl moiety of geranylgeranyl diphosphate (GGPP) to the C3 hydroxyl of sn-glycerol-1-phosphate (G1P). This reaction is the first ether-bond-formation step in the biosynthesis of archaeal membrane lipids. The chain is Geranylgeranylglyceryl phosphate synthase from Aeropyrum pernix (strain ATCC 700893 / DSM 11879 / JCM 9820 / NBRC 100138 / K1).